The primary structure comprises 400 residues: Phosphoglycerate kinase (400 aa).

Substrate-binding positions include 22 to 24 (DFN), arginine 38, 61 to 64 (HLGR), arginine 119, and arginine 152. ATP is bound by residues lysine 205, glycine 296, glutamate 327, and 353–356 (GGDT).

This sequence belongs to the phosphoglycerate kinase family. Monomer.

It localises to the cytoplasm. It carries out the reaction (2R)-3-phosphoglycerate + ATP = (2R)-3-phospho-glyceroyl phosphate + ADP. It participates in carbohydrate degradation; glycolysis; pyruvate from D-glyceraldehyde 3-phosphate: step 2/5. This Campylobacter jejuni subsp. jejuni serotype O:23/36 (strain 81-176) protein is Phosphoglycerate kinase.